The chain runs to 131 residues: Small ribosomal subunit protein uS8 (131 aa).

This sequence belongs to the universal ribosomal protein uS8 family. Part of the 30S ribosomal subunit. Contacts proteins S5 and S12.

Functionally, one of the primary rRNA binding proteins, it binds directly to 16S rRNA central domain where it helps coordinate assembly of the platform of the 30S subunit. The protein is Small ribosomal subunit protein uS8 of Bordetella avium (strain 197N).